Consider the following 233-residue polypeptide: Cilia- and flagella-associated protein 299 (233 aa).

Its subcellular location is the cytoplasm. It localises to the nucleus. May be involved in spermatogenesis. This is Cilia- and flagella-associated protein 299 from Homo sapiens (Human).